The following is a 98-amino-acid chain: U-megalopygitoxin(1)-Mo1 (98 aa).

The N-terminal stretch at 1 to 17 (MYRETFVFCVLLAVVSA) is a signal peptide.

This sequence belongs to the caterpillar 1 family. Contains 4 disulfide bonds. As to expression, expressed by the venom apparatus.

Its subcellular location is the secreted. Its function is as follows. Probable toxin. This chain is U-megalopygitoxin(1)-Mo1, found in Megalopyge opercularis (Southern flannel moth).